Reading from the N-terminus, the 1203-residue chain is MEKYVRLQKIGEGSFGKAVLVKSTEDGRHYVIKEINISRMSDKERQESRREVAVLANMKHPNIVQYKESFEENGSLYIVMDYCEGGDLFKRINAQKGALFQEDQILDWFVQICLALKHVHDRKILHRDIKSQNIFLTKDGTVQLGDFGIARVLNSTVELARTCIGTPYYLSPEICENKPYNNKSDIWALGCVLYELCTLKHAFEAGNMKNLVLKIISGSFPPVSPHYSYDLRSLLSQLFKRNPRDRPSVNSILEKGFIAKRIEKFLSPQLIAEEFCLKTLSKFGPQPLPGKRPASGQGVSSFVPAQKITKPAAKYGVPLTYKKYGDKKLLEKKPPPKHKQAHQIPVKKMNSGEERKKMSEEAAKKRRLEFIEKEKKQKDQIRFLKAEQMKRQEKQRLERINRAREQGWRNVLRAGGSGEVKASFFGIGGAVSPSPCSPRGQYEHYHAIFDQMQRLRAEDNEARWKGGIYGRWLPERQKGHLAVERANQVEEFLQRKREAMQNKARAEGHVVYLARLRQIRLQNFNERQQIKAKLRGENKEADGTKGQEATEETDMRLKKMESLKAQTNARAAVLKEQLERKRKEAYEREKKVWEEHLVARVKSSDVPLPLELLETGGSPSKQQVKPVISVTSALKEVGLDGSLTDTQEEEMEKSNSAISSKREILRRLNENLKAQEDEKEKQHHSGSCETVGHKDEREYETENAISSDRKKWEMGGQLVIPLDAVTLDTSFSATEKHTVGEVIKLDSNGSPRKVWGKNPTDSVLKILGEAELQLQTELLENTSFKSEVYAEEENYKPLLTEEENLQCISKEINPSATVDSTETKSPKFTEVSPQMSEGNVEEPDDLETEVLQEPSSTHTDGSLPPVLNDVWTREKEAAKETELEDKVAVQQSEVCEDRIPGNVDQSCKDQRDPAVDDSPQSGCDVEKSVQPESIFQKVVHSKDLNLVQAVHCSPEEPIPIRSHSDSPPKTKSKNSLLIGLSTGLFDANNPKMLRTCSLPDLSKLFRTLMDVPTVGDVHQDSLEIDELEDEPIKEGPSDSEDTVFEETDTDLQELQASMEQLLREQPGDEYSEEEESVLKSSDVEQTARGTDAPDEEDNPSSESALNEEWHSDNSDAETTSECEYDSVFNHLEELRLHLEQEMGFEKFFEVYEKVKAIHEDEDENIEICSTIVENILGNEHQHLYAKILHLVMADGAYQEDNDE.

The 255-residue stretch at 4–258 folds into the Protein kinase domain; that stretch reads YVRLQKIGEG…VNSILEKGFI (255 aa). ATP contacts are provided by residues 10-18 and K33; that span reads IGEGSFGKA. D128 functions as the Proton acceptor in the catalytic mechanism. T156 carries the post-translational modification Phosphothreonine. Residue T162 is modified to Phosphothreonine; by autocatalysis. Positions 329-357 are disordered; sequence LLEKKPPPKHKQAHQIPVKKMNSGEERKK. Residues S417 and S437 each carry the phosphoserine modification. Residue T615 is modified to Phosphothreonine. A Phosphoserine modification is found at S618. Disordered stretches follow at residues 643 to 662 and 674 to 708; these read LTDTQEEEMEKSNSAISSKR and AQEDEKEKQHHSGSCETVGHKDEREYETENAISSD. Over residues 674–683 the composition is skewed to basic and acidic residues; it reads AQEDEKEKQH. 4 positions are modified to phosphoserine: S750, S786, S820, and S832. Disordered regions lie at residues 814–866 and 888–925; these read PSAT…LPPV and AVQQSEVCEDRIPGNVDQSCKDQRDPAVDDSPQSGCDV. Residues 839–850 show a composition bias toward acidic residues; the sequence is NVEEPDDLETEV. The residue at position 997 (S997) is a Phosphoserine. 2 disordered regions span residues 1021–1045 and 1063–1120; these read SLEIDELEDEPIKEGPSDSEDTVFE and REQP…ETTS. The residue at position 1071 (S1071) is a Phosphoserine.

It belongs to the protein kinase superfamily. NEK Ser/Thr protein kinase family. NIMA subfamily. In terms of assembly, binds to CBY2. Found in a complex with CFAP410, NEK1 and SPATA7. Interacts with CFAP410. Interacts (via Ser-997 phosphorylated form) with 14-3-3 proteins. It depends on Mg(2+) as a cofactor. In terms of tissue distribution, predominantly in testes (germ cells and Sertoli cells). Lower levels in ovary (oocytes and granulosa cells), thymus and lung.

It localises to the nucleus. The protein localises to the cytoplasm. Its subcellular location is the cytoskeleton. The protein resides in the microtubule organizing center. It is found in the centrosome. It catalyses the reaction L-seryl-[protein] + ATP = O-phospho-L-seryl-[protein] + ADP + H(+). The catalysed reaction is L-threonyl-[protein] + ATP = O-phospho-L-threonyl-[protein] + ADP + H(+). In terms of biological role, phosphorylates serines and threonines, but also appears to possess tyrosine kinase activity. Involved in DNA damage checkpoint control and for proper DNA damage repair. In response to injury that includes DNA damage, NEK1 phosphorylates VDAC1 to limit mitochondrial cell death. May be implicated in the control of meiosis. Involved in cilium assembly. The protein is Serine/threonine-protein kinase Nek1 (Nek1) of Mus musculus (Mouse).